Reading from the N-terminus, the 108-residue chain is Cell division topological specificity factor (108 aa).

It belongs to the MinE family.

In terms of biological role, prevents the cell division inhibition by proteins MinC and MinD at internal division sites while permitting inhibition at polar sites. This ensures cell division at the proper site by restricting the formation of a division septum at the midpoint of the long axis of the cell. This Prochlorococcus marinus (strain AS9601) protein is Cell division topological specificity factor.